We begin with the raw amino-acid sequence, 501 residues long: 1-aminocyclopropane-1-carboxylate synthase-like protein 1 (501 aa).

Position 105 (Glu-105) interacts with substrate. Lys-323 bears the N6-(pyridoxal phosphate)lysine mark. Positions 480–501 are disordered; the sequence is GKSQVAEDPRPSQSQEPSDQRR. The segment covering 490-501 has biased composition (polar residues); it reads PSQSQEPSDQRR.

This sequence belongs to the class-I pyridoxal-phosphate-dependent aminotransferase family.

Functionally, does not catalyze the synthesis of 1-aminocyclopropane-1-carboxylate but is capable of catalyzing the deamination of L-vinylglycine. The polypeptide is 1-aminocyclopropane-1-carboxylate synthase-like protein 1 (ACCS) (Homo sapiens (Human)).